The sequence spans 270 residues: Gene 1 protein (270 aa).

The tract at residues tryptophan 225–proline 249 is disordered.

The polypeptide is Gene 1 protein (1) (Mycobacterium (Mycobacteriophage D29)).